Reading from the N-terminus, the 187-residue chain is Calmodulin-like protein 1 (187 aa).

Ala-2 carries the post-translational modification N-acetylalanine. EF-hand domains are found at residues 8–43 (EQIV…LGQN), 44–79 (PTEA…KLRD), 81–116 (DSEE…IGER), and 117–152 (LTDE…KKRR). Residues Asp-21, Asp-23, Asp-25, Ser-27, Glu-32, Asp-57, Asp-59, Asn-61, Asn-63, Glu-68, Asp-94, Asp-96, Asn-98, Glu-105, Asp-130, Asp-132, Asp-134, Gln-136, and Glu-141 each contribute to the Ca(2+) site. Positions 153–187 (KRIEEKREHDGGSRTKSAGPSAAPASKRGQKCVIL) are disordered. A compositionally biased stretch (basic and acidic residues) spans 154–165 (RIEEKREHDGGS). Positions 169-178 (SAGPSAAPAS) are enriched in low complexity. A Cysteine methyl ester modification is found at Cys-184. Cys-184 is lipidated: S-farnesyl cysteine. Positions 185 to 187 (VIL) are cleaved as a propeptide — removed in mature form.

The protein belongs to the calmodulin family. In terms of tissue distribution, expressed in roots, etiolated shoots and flowers.

The protein resides in the membrane. In terms of biological role, calcium-binding protein that binds and activates CAMK1, a calcium/calmodulin-dependent kinase. In Oryza sativa subsp. indica (Rice), this protein is Calmodulin-like protein 1 (CML1).